We begin with the raw amino-acid sequence, 293 residues long: Pyridoxal 5'-phosphate synthase subunit PdxS (293 aa).

D-ribose 5-phosphate is bound at residue aspartate 23. The active-site Schiff-base intermediate with D-ribose 5-phosphate is the lysine 80. Residue glycine 152 participates in D-ribose 5-phosphate binding. Arginine 164 contacts D-glyceraldehyde 3-phosphate. Residues glycine 213 and 234–235 (GS) each bind D-ribose 5-phosphate.

It belongs to the PdxS/SNZ family. In terms of assembly, in the presence of PdxT, forms a dodecamer of heterodimers.

It carries out the reaction aldehydo-D-ribose 5-phosphate + D-glyceraldehyde 3-phosphate + L-glutamine = pyridoxal 5'-phosphate + L-glutamate + phosphate + 3 H2O + H(+). Its pathway is cofactor biosynthesis; pyridoxal 5'-phosphate biosynthesis. Functionally, catalyzes the formation of pyridoxal 5'-phosphate from ribose 5-phosphate (RBP), glyceraldehyde 3-phosphate (G3P) and ammonia. The ammonia is provided by the PdxT subunit. Can also use ribulose 5-phosphate and dihydroxyacetone phosphate as substrates, resulting from enzyme-catalyzed isomerization of RBP and G3P, respectively. The polypeptide is Pyridoxal 5'-phosphate synthase subunit PdxS (Dehalococcoides mccartyi (strain ATCC BAA-2266 / KCTC 15142 / 195) (Dehalococcoides ethenogenes (strain 195))).